The following is a 378-amino-acid chain: L-lactate dehydrogenase (378 aa).

In terms of domain architecture, FMN hydroxy acid dehydrogenase spans 1 to 378; that stretch reads MIISASTDYR…ELSRDSLVKR (378 aa). Y24 lines the substrate pocket. Residues S106 and Q127 each coordinate FMN. Y129 provides a ligand contact to substrate. FMN is bound at residue T155. R164 is a binding site for substrate. K251 lines the FMN pocket. The active-site Proton acceptor is H275. R278 lines the substrate pocket. FMN is bound at residue 306-330; it reads DSGIRTGLDVVRMLALGADCTMLGR.

Belongs to the FMN-dependent alpha-hydroxy acid dehydrogenase family. It depends on FMN as a cofactor.

It localises to the cell inner membrane. The catalysed reaction is (S)-lactate + A = pyruvate + AH2. Functionally, catalyzes the conversion of L-lactate to pyruvate. Is coupled to the respiratory chain. This chain is L-lactate dehydrogenase, found in Vibrio cholerae serotype O1 (strain ATCC 39315 / El Tor Inaba N16961).